A 254-amino-acid polypeptide reads, in one-letter code: MLTIGGKQFQSRLLLGTGKYPSFEIQKEAVAVSESDILTFAVRRMNIFEESQPNFLEQLDLSKYTLLPNTAGAATAEEAVRIARLAKASGLCDMIKVEVIGCSRSLLPDPVETLKASEQLLEEGFIVLPYTSDDVVLARRLEELGVHAIMPGASPIGSGQGILNPLNLSFIIEQAKVPVIVDAGVGSSKDAAYAMELGADGVLLNTAVSGADDPVKMARAMKLAVEAGRLSYEAGRIPVKDYGTASSPRDGLPV.

Lys-96 functions as the Schiff-base intermediate with DXP in the catalytic mechanism. 1-deoxy-D-xylulose 5-phosphate is bound by residues Gly-157, 183 to 184 (AG), and 205 to 206 (NT).

It belongs to the ThiG family. In terms of assembly, homotetramer. Forms heterodimers with either ThiH or ThiS.

The protein resides in the cytoplasm. It carries out the reaction [ThiS sulfur-carrier protein]-C-terminal-Gly-aminoethanethioate + 2-iminoacetate + 1-deoxy-D-xylulose 5-phosphate = [ThiS sulfur-carrier protein]-C-terminal Gly-Gly + 2-[(2R,5Z)-2-carboxy-4-methylthiazol-5(2H)-ylidene]ethyl phosphate + 2 H2O + H(+). Its pathway is cofactor biosynthesis; thiamine diphosphate biosynthesis. Its function is as follows. Catalyzes the rearrangement of 1-deoxy-D-xylulose 5-phosphate (DXP) to produce the thiazole phosphate moiety of thiamine. Sulfur is provided by the thiocarboxylate moiety of the carrier protein ThiS. In vitro, sulfur can be provided by H(2)S. The chain is Thiazole synthase from Bacillus velezensis (strain DSM 23117 / BGSC 10A6 / LMG 26770 / FZB42) (Bacillus amyloliquefaciens subsp. plantarum).